Consider the following 435-residue polypeptide: MNIAVVGLSHRTAPVEVREKLSISDDNIPSAFNTLNTNDQIIEVSILSTCNRLEIYSFVKNSDNGVKAIKDFLCKHSGLGIDELDPHLFSYDQAEAVKHVMRVAGGLDSLVLGEGQILSQVKKMVRLGQENHSMGPILNRLLTQAVSTGKRVRSETNLGTGAVSISSAAVELAQLKLGQSEGKDELMSLEREKVSIVGAGRMSRLLIQHLQSKGCSKLKLINRTFQRAEALALDFPDVDIHCQLLDDLDESLRNSTLIFTSTAAENPIIDAARLKEVVRDETLRLIDIGVPRNISSDVKGLTGFEAHDVDDLQEVVSRNQEARQQIALEAEALVDEEGRIFLEWWASLEAVPTINLLRSSLESVRKEELQKALSRMGPDFSARERKVVEALSKGIINKILHTPVTNLRAPQTSSNRKISLEVIETLFELGVSESE.

Residues 49–52 (TCNR), serine 109, 114–116 (EGQ), and glutamine 120 each bind substrate. The Nucleophile role is filled by cysteine 50. 198 to 203 (GAGRMS) contacts NADP(+).

This sequence belongs to the glutamyl-tRNA reductase family. In terms of assembly, homodimer.

The catalysed reaction is (S)-4-amino-5-oxopentanoate + tRNA(Glu) + NADP(+) = L-glutamyl-tRNA(Glu) + NADPH + H(+). It functions in the pathway porphyrin-containing compound metabolism; protoporphyrin-IX biosynthesis; 5-aminolevulinate from L-glutamyl-tRNA(Glu): step 1/2. The protein operates within porphyrin-containing compound metabolism; chlorophyll biosynthesis. Catalyzes the NADPH-dependent reduction of glutamyl-tRNA(Glu) to glutamate 1-semialdehyde (GSA). The protein is Glutamyl-tRNA reductase of Prochlorococcus marinus (strain MIT 9211).